A 520-amino-acid chain; its full sequence is L-tyrosine:2-oxoglutarate aminotransferase amt1 (520 aa).

This sequence belongs to the class-I pyridoxal-phosphate-dependent aminotransferase family. The cofactor is pyridoxal 5'-phosphate.

The catalysed reaction is L-tyrosine + 2-oxoglutarate = 3-(4-hydroxyphenyl)pyruvate + L-glutamate. It functions in the pathway secondary metabolite biosynthesis. An L-tyrosine:2-oxoglutarate aminotransferase (probably amt1) and atromentin synthetase nps3 catalyze consecutive steps to turn over L-tyrosine into atromentin, which represents the generic precursor molecule for the entire terphenylquinone and pulvinic acid family of pigments, which are widely distributed secondary metabolites in homobasidiomycetes. The first step catalyzed by amt1 converts L-tyrosine in to 4-hydroxyphenylpyruvate (4-HPP). Adenylation of two 4-HPP monomers by the nps3 adenylation (A) domain, covalent tethering of the monomers as a thioester and oxoester onto the nps3 thiolation (T) and thioesterase (TE) domains, respectively, and symmetric C-C-bond formation between two monomers catalyzed by the nps3 TE domain leads to atromentin. Follow-up products of atromentin in S.lacrymans include atromentic acid, xerocomic acid, isoxerocomic acid and variegatic acid. The sequence is that of L-tyrosine:2-oxoglutarate aminotransferase amt1 (amt1) from Serpula lacrymans var. lacrymans (strain S7.9) (Dry rot fungus).